The following is a 485-amino-acid chain: 3-isopropylmalate dehydratase large subunit (485 aa).

[4Fe-4S] cluster-binding residues include cysteine 367, cysteine 427, and cysteine 430. Positions 439–451 (SPGQRAASTSNRN) are enriched in polar residues. The disordered stretch occupies residues 439 to 462 (SPGQRAASTSNRNFEGRQGKGGRT).

The protein belongs to the aconitase/IPM isomerase family. LeuC type 1 subfamily. Heterodimer of LeuC and LeuD. The cofactor is [4Fe-4S] cluster.

The catalysed reaction is (2R,3S)-3-isopropylmalate = (2S)-2-isopropylmalate. Its pathway is amino-acid biosynthesis; L-leucine biosynthesis; L-leucine from 3-methyl-2-oxobutanoate: step 2/4. Functionally, catalyzes the isomerization between 2-isopropylmalate and 3-isopropylmalate, via the formation of 2-isopropylmaleate. The protein is 3-isopropylmalate dehydratase large subunit of Actinoplanes teichomyceticus.